The chain runs to 222 residues: Ribose-5-phosphate isomerase A (222 aa).

Substrate contacts are provided by residues T28–T31, D81–D84, and K94–G97. E103 serves as the catalytic Proton acceptor. K121 contacts substrate.

It belongs to the ribose 5-phosphate isomerase family. Homodimer.

The enzyme catalyses aldehydo-D-ribose 5-phosphate = D-ribulose 5-phosphate. Its pathway is carbohydrate degradation; pentose phosphate pathway; D-ribose 5-phosphate from D-ribulose 5-phosphate (non-oxidative stage): step 1/1. Catalyzes the reversible conversion of ribose-5-phosphate to ribulose 5-phosphate. This is Ribose-5-phosphate isomerase A from Azoarcus sp. (strain BH72).